The sequence spans 352 residues: F-box/kelch-repeat protein At1g57790 (352 aa).

The 47-residue stretch at 10 to 56 folds into the F-box domain; sequence KNLWKDLPLELLSSVMTFLEIKDNVRASVVCKSWFEAAVSVRVIDKS. Kelch repeat units lie at residues 148 to 189 and 190 to 234; these read VVFT…HNNV and VFSN…WNEG.

The chain is F-box/kelch-repeat protein At1g57790 from Arabidopsis thaliana (Mouse-ear cress).